Consider the following 422-residue polypeptide: 5'-deoxyadenosine deaminase (422 aa).

Zn(2+)-binding residues include His-57 and His-59. Residues Glu-86 and His-178 each contribute to the substrate site. Residue His-205 coordinates Zn(2+). Substrate is bound by residues Glu-208 and Asp-294. Asp-294 provides a ligand contact to Zn(2+).

It belongs to the metallo-dependent hydrolases superfamily. MTA/SAH deaminase family. In terms of assembly, homotetramer. It depends on Zn(2+) as a cofactor.

It catalyses the reaction 5'-deoxyadenosine + H2O + H(+) = 5'-deoxyinosine + NH4(+). It carries out the reaction S-adenosyl-L-homocysteine + H2O + H(+) = S-inosyl-L-homocysteine + NH4(+). The catalysed reaction is S-methyl-5'-thioadenosine + H2O + H(+) = S-methyl-5'-thioinosine + NH4(+). The enzyme catalyses adenosine + H2O + H(+) = inosine + NH4(+). The protein operates within amino-acid biosynthesis; S-adenosyl-L-methionine biosynthesis. Functionally, catalyzes the deamination of three SAM-derived enzymatic products, namely 5'-deoxyadenosine, S-adenosyl-L-homocysteine, and 5'-methylthioadenosine, to produce the inosine analogs. Can also deaminate adenosine. The preferred substrate for this enzyme is 5'-deoxyadenosine, but all these substrates are efficiently deaminated. Likely functions in a S-adenosyl-L-methionine (SAM) recycling pathway from S-adenosyl-L-homocysteine (SAH) produced from SAM-dependent methylation reactions. May also be involved in the recycling of 5'-deoxyadenosine, whereupon the 5'-deoxyribose moiety of 5'-deoxyinosine is further metabolized to deoxyhexoses used for the biosynthesis of aromatic amino acids in methanogens. The chain is 5'-deoxyadenosine deaminase from Methanococcus maripaludis (strain DSM 14266 / JCM 13030 / NBRC 101832 / S2 / LL).